A 157-amino-acid polypeptide reads, in one-letter code: Phosphopantetheine adenylyltransferase (157 aa).

Residue Ser-9 coordinates substrate. Residues 9–10 (SF) and His-17 each bind ATP. Residues Lys-41, Leu-73, and Lys-87 each coordinate substrate. Residues 88-90 (GLR), Glu-98, and 123-129 (YSFLSSS) contribute to the ATP site.

The protein belongs to the bacterial CoaD family. As to quaternary structure, homohexamer. Mg(2+) is required as a cofactor.

The protein localises to the cytoplasm. The catalysed reaction is (R)-4'-phosphopantetheine + ATP + H(+) = 3'-dephospho-CoA + diphosphate. Its pathway is cofactor biosynthesis; coenzyme A biosynthesis; CoA from (R)-pantothenate: step 4/5. Functionally, reversibly transfers an adenylyl group from ATP to 4'-phosphopantetheine, yielding dephospho-CoA (dPCoA) and pyrophosphate. In Alkaliphilus oremlandii (strain OhILAs) (Clostridium oremlandii (strain OhILAs)), this protein is Phosphopantetheine adenylyltransferase.